The following is a 313-amino-acid chain: Ribosomal RNA small subunit methyltransferase H (313 aa).

S-adenosyl-L-methionine contacts are provided by residues 35-37, D55, F79, D101, and Q108; that span reads GGH.

The protein belongs to the methyltransferase superfamily. RsmH family.

The protein localises to the cytoplasm. It catalyses the reaction cytidine(1402) in 16S rRNA + S-adenosyl-L-methionine = N(4)-methylcytidine(1402) in 16S rRNA + S-adenosyl-L-homocysteine + H(+). Specifically methylates the N4 position of cytidine in position 1402 (C1402) of 16S rRNA. This Shigella flexneri protein is Ribosomal RNA small subunit methyltransferase H.